The following is a 330-amino-acid chain: Phosphate acyltransferase (330 aa).

Belongs to the PlsX family. As to quaternary structure, homodimer. Probably interacts with PlsY.

Its subcellular location is the cytoplasm. The catalysed reaction is a fatty acyl-[ACP] + phosphate = an acyl phosphate + holo-[ACP]. The protein operates within lipid metabolism; phospholipid metabolism. Functionally, catalyzes the reversible formation of acyl-phosphate (acyl-PO(4)) from acyl-[acyl-carrier-protein] (acyl-ACP). This enzyme utilizes acyl-ACP as fatty acyl donor, but not acyl-CoA. The polypeptide is Phosphate acyltransferase (Lactobacillus delbrueckii subsp. bulgaricus (strain ATCC BAA-365 / Lb-18)).